We begin with the raw amino-acid sequence, 106 residues long: Small ribosomal subunit protein uS10 (106 aa).

The protein belongs to the universal ribosomal protein uS10 family. In terms of assembly, part of the 30S ribosomal subunit.

Involved in the binding of tRNA to the ribosomes. The chain is Small ribosomal subunit protein uS10 from Parasynechococcus marenigrum (strain WH8102).